Consider the following 387-residue polypeptide: 3-ketoacyl-CoA thiolase (387 aa).

The Acyl-thioester intermediate role is filled by C91. Residues H343 and C373 each act as proton acceptor in the active site.

It belongs to the thiolase-like superfamily. Thiolase family. In terms of assembly, heterotetramer of two alpha chains (FadB) and two beta chains (FadA).

Its subcellular location is the cytoplasm. The enzyme catalyses an acyl-CoA + acetyl-CoA = a 3-oxoacyl-CoA + CoA. It functions in the pathway lipid metabolism; fatty acid beta-oxidation. Functionally, catalyzes the final step of fatty acid oxidation in which acetyl-CoA is released and the CoA ester of a fatty acid two carbons shorter is formed. The protein is 3-ketoacyl-CoA thiolase of Shewanella frigidimarina (strain NCIMB 400).